A 455-amino-acid polypeptide reads, in one-letter code: Phosphoglucosamine mutase (455 aa).

Ser-106 (phosphoserine intermediate) is an active-site residue. Mg(2+) is bound by residues Ser-106, Asp-245, Asp-247, and Asp-249. Ser-106 carries the post-translational modification Phosphoserine.

This sequence belongs to the phosphohexose mutase family. The cofactor is Mg(2+). Post-translationally, activated by phosphorylation.

The catalysed reaction is alpha-D-glucosamine 1-phosphate = D-glucosamine 6-phosphate. Its function is as follows. Catalyzes the conversion of glucosamine-6-phosphate to glucosamine-1-phosphate. The protein is Phosphoglucosamine mutase of Acaryochloris marina (strain MBIC 11017).